The chain runs to 956 residues: Netrin receptor UNC5D (956 aa).

The signal sequence occupies residues 1–30 (MGTGAADGSRGARRWLPWLGLFFWAAGAAA). Topologically, residues 31–382 (ARGADGSEIL…SRRGIENASD (352 aa)) are extracellular. In terms of domain architecture, Ig-like spans 52 to 149 (PHFIEEPEDA…LGTSKSRKAS (98 aa)). Cystine bridges form between C73/C134, C85/C132, C178/C229, C262/C299, C266/C303, C277/C289, C318/C352, C322/C357, and C330/C342. Residues 89–91 (WVH) are important for interaction with FLRT2. N-linked (GlcNAc...) asparagine glycans are attached at residues N115 and N226. The Ig-like C2-type domain occupies 151 to 242 (RIAYLRKNFE…NIVAKRRSLS (92 aa)). 2 consecutive TSP type-1 domains span residues 250–304 (NGGW…ALCP) and 306–358 (DGSW…GLCI). 2 N-linked (GlcNAc...) asparagine glycosylation sites follow: N351 and N379. The chain crosses the membrane as a helical span at residues 383–403 (IALYSGLGAAVVAVAVLVIGV). At 404–956 (TLYRRSHSDY…DFNYSRQNGL (553 aa)) the chain is on the cytoplasmic side. In terms of domain architecture, ZU5 spans 545–685 (LRTTGVFGHL…FGTYALTGEP (141 aa)). Residues 862–939 (QRICATFDTP…RTHTKLSNIT (78 aa)) form the Death domain.

It belongs to the unc-5 family. As to quaternary structure, interacts (via extracellular domain) with FLRT2 and FLRT3 (via extracellular domain); the interaction is direct. Has higher affinity for FLRT2. Identified in a complex with FLRT3 and ADGRL3; does not interact with ADGRL3 by itself. Post-translationally, proteolytically cleaved by caspases during apoptosis. The cleavage does not take place when the receptor is associated with netrin ligand. Its cleavage by caspases is required to induce apoptosis. In terms of tissue distribution, detected in multipolar cells in the brain subventricular zone (at protein level). Detected in embryonic brain neocortex, especially in the subventricular zone. Detected in multipolar cells in the brain subventricular zone. Detected in brain neocortex from young pups, especially in the somatosensory cortex. Expressed in developing limb and mammary gland.

The protein resides in the cell membrane. Its function is as follows. Receptor for the netrin NTN4 that promotes neuronal cell survival. Plays a role in cell-cell adhesion and cell guidance. Receptor for netrin involved in cell migration. Plays a role in the regulation of neuronal cell migration in the developing brain via its interaction with FLRT2. Plays a role in axon guidance by mediating axon repulsion of neuronal growth cones in the developing nervous system upon ligand binding. May play a role in apoptosis in response to DNA damage. It also acts as a dependence receptor required for apoptosis induction when not associated with netrin ligand. Mediates cell-cell adhesion via its interaction with FLRT3 on an adjacent cell. This chain is Netrin receptor UNC5D (Unc5d), found in Mus musculus (Mouse).